A 295-amino-acid chain; its full sequence is Proline-rich protein 32 (295 aa).

Disordered regions lie at residues 10–48 and 101–120; these read GHAP…GHPG and ATGE…SGQD.

In Bos taurus (Bovine), this protein is Proline-rich protein 32 (PRR32).